The chain runs to 353 residues: ATP-dependent (S)-NAD(P)H-hydrate dehydratase (353 aa).

In terms of domain architecture, YjeF C-terminal spans 18–345 (MLARVRQMVP…DEVHTAFLNL (328 aa)). The tract at residues 95 to 121 (RSSPPALSSSDSGSSPSRTKSAPDTDP) is disordered. Residues 96–114 (SSPPALSSSDSGSSPSRTK) show a composition bias toward low complexity. Residues glycine 143 and 196–202 (NVVEFGR) each bind (6S)-NADPHX. ATP is bound by residues 241-245 (KGAKD) and 260-269 (GGLKRSGGQG). Aspartate 270 provides a ligand contact to (6S)-NADPHX.

It belongs to the NnrD/CARKD family. Mg(2+) is required as a cofactor.

Its subcellular location is the cytoplasm. It carries out the reaction (6S)-NADHX + ATP = ADP + phosphate + NADH + H(+). The catalysed reaction is (6S)-NADPHX + ATP = ADP + phosphate + NADPH + H(+). Functionally, catalyzes the dehydration of the S-form of NAD(P)HX at the expense of ATP, which is converted to ADP. Together with NAD(P)HX epimerase, which catalyzes the epimerization of the S- and R-forms, the enzyme allows the repair of both epimers of NAD(P)HX, a damaged form of NAD(P)H that is a result of enzymatic or heat-dependent hydration. The protein is ATP-dependent (S)-NAD(P)H-hydrate dehydratase of Neurospora crassa (strain ATCC 24698 / 74-OR23-1A / CBS 708.71 / DSM 1257 / FGSC 987).